A 532-amino-acid polypeptide reads, in one-letter code: Beta-hexosaminidase subunit A1 (532 aa).

Positions Met1–Gly18 are cleaved as a signal peptide. Residues Asn72 and Asn79 are each glycosylated (N-linked (GlcNAc...) asparagine). Residue Glu308 is the Proton donor of the active site. N-linked (GlcNAc...) asparagine glycans are attached at residues Asn350 and Asn427.

Belongs to the glycosyl hydrolase 20 family. As to quaternary structure, dimer. The N-terminus is blocked. Post-translationally, N-glycosylated.

The protein localises to the lysosome. It carries out the reaction Hydrolysis of terminal non-reducing N-acetyl-D-hexosamine residues in N-acetyl-beta-D-hexosaminides.. In terms of biological role, responsible for the degradation of GM2 gangliosides, and a variety of other molecules containing terminal N-acetyl hexosamines. This enzyme plays a role during the slug stage of development in the maintenance of pseudoplasmodia of normal size. The protein is Beta-hexosaminidase subunit A1 (hexa1) of Dictyostelium discoideum (Social amoeba).